Reading from the N-terminus, the 243-residue chain is Cell surface glycoprotein CD200 receptor 1-B (243 aa).

The Cytoplasmic segment spans residues 1–29 (MEISQQAGWCKKPASPMNTRAALEAVRNT). The chain crosses the membrane as a helical; Signal-anchor for type II membrane protein span at residues 30-47 (AWTIVLLTSAAVMGASGI). One can recognise an Ig-like V-type domain in the interval 47–146 (ISRVSANLGH…GNFHYLYHLT (100 aa)). At 48 to 243 (SRVSANLGHS…LAQLPGGSAP (196 aa)) the chain is on the lumenal side. Intrachain disulfides connect C62–C130 and C165–C214. N-linked (GlcNAc...) asparagine glycans are attached at residues N64, N67, N127, N193, N222, and N228. The region spanning 144 to 228 (HLTVLVAPRM…ATLNETRSIN (85 aa)) is the Ig-like C2-type domain.

Belongs to the CD200R family. In terms of tissue distribution, expressed in peripheral blood lymphocytes (PBL) and peripheral blood mononuclear cells (PBMC).

Its subcellular location is the membrane. This is Cell surface glycoprotein CD200 receptor 1-B (CD200R1B) from Gallus gallus (Chicken).